Here is a 206-residue protein sequence, read N- to C-terminus: RNA pyrophosphohydrolase (206 aa).

A Nudix hydrolase domain is found at 6–150 (GYRPNVGIVI…KRDVYRKVMK (145 aa)). Residues 38 to 59 (GGINEGENIETAMYRELYEEVG) carry the Nudix box motif. Residues 162 to 191 (KPETVEKPRVERTEKRDFQKRDNQKREFRK) show a composition bias toward basic and acidic residues. Residues 162 to 206 (KPETVEKPRVERTEKRDFQKRDNQKREFRKSARMWNNSHQKGKAQ) are disordered.

The protein belongs to the Nudix hydrolase family. RppH subfamily. A divalent metal cation is required as a cofactor.

In terms of biological role, accelerates the degradation of transcripts by removing pyrophosphate from the 5'-end of triphosphorylated RNA, leading to a more labile monophosphorylated state that can stimulate subsequent ribonuclease cleavage. The protein is RNA pyrophosphohydrolase of Actinobacillus pleuropneumoniae serotype 5b (strain L20).